The following is a 221-amino-acid chain: Protein myomaker (221 aa).

Topologically, residues 1-3 (MGT) are extracellular. The chain crosses the membrane as a helical span at residues 4–24 (LVAKLLLPTLSSLAFLPTVSI). Residues 25–34 (AAKRRFHMEA) lie on the Cytoplasmic side of the membrane. A helical transmembrane segment spans residues 35 to 55 (MVYLFTLFFVALHHACNGPGL). The Extracellular portion of the chain corresponds to 56–64 (SVLCFMRHD). A helical transmembrane segment spans residues 65 to 85 (ILEYFSVYGTALSMWVSLMAL). Over 86-92 (ADFDEPK) the chain is Cytoplasmic. Residues 93-110 (RSTFVMFGVLTIAVRIYH) traverse the membrane as a helical segment. The Extracellular segment spans residues 111 to 113 (DRW). A helical membrane pass occupies residues 114–134 (GYGVYSGPIGTAILIIAAKWL). Over 135–153 (QKMKEKKGLYPDKSVYTQQ) the chain is Cytoplasmic. A helical membrane pass occupies residues 154–174 (IGPGLCFGALALMLRFFFEDW). Residue Asp-175 is a topological domain, extracellular. Residues 176–196 (YTYVHSFYHCALAMSFVLLLP) form a helical membrane-spanning segment. The Cytoplasmic segment spans residues 197–221 (KVNKKAGSPGTPAKLDCSTLCCACV). Residues Cys-217 and Cys-218 are each lipidated (S-palmitoyl cysteine).

The protein belongs to the TMEM8 family. Interacts with MYMX. Palmitoylated at the C-terminus; palmitoylation promotes localization to the Golgi apparatus.

The protein resides in the cell membrane. It localises to the golgi apparatus membrane. Its function is as follows. Myoblast-specific protein that mediates myoblast fusion, an essential step for the formation of multi-nucleated muscle fibers. Actively participates in the membrane fusion reaction by mediating the mixing of cell membrane lipids (hemifusion) upstream of MYMX. Acts independently of MYMX. Involved in skeletal muscle regeneration in response to injury by mediating the fusion of satellite cells, a population of muscle stem cells, with injured myofibers. Also involved in skeletal muscle hypertrophy, probably by mediating the fusion of satellite cells with myofibers. In Homo sapiens (Human), this protein is Protein myomaker.